The following is a 398-amino-acid chain: 1-deoxy-D-xylulose 5-phosphate reductoisomerase (398 aa).

Thr10, Gly11, Ser12, Ile13, Gly36, Asn38, and Asn124 together coordinate NADPH. Lys125 is a 1-deoxy-D-xylulose 5-phosphate binding site. NADPH is bound at residue Glu126. A Mn(2+)-binding site is contributed by Asp150. 1-deoxy-D-xylulose 5-phosphate contacts are provided by Ser151, Glu152, Ser186, and His209. Glu152 provides a ligand contact to Mn(2+). Gly215 contacts NADPH. Residues Ser222, Asn227, Lys228, and Glu231 each coordinate 1-deoxy-D-xylulose 5-phosphate. Residue Glu231 coordinates Mn(2+).

It belongs to the DXR family. Homodimer. Mg(2+) serves as cofactor. The cofactor is Mn(2+).

It catalyses the reaction 2-C-methyl-D-erythritol 4-phosphate + NADP(+) = 1-deoxy-D-xylulose 5-phosphate + NADPH + H(+). It functions in the pathway isoprenoid biosynthesis; isopentenyl diphosphate biosynthesis via DXP pathway; isopentenyl diphosphate from 1-deoxy-D-xylulose 5-phosphate: step 1/6. Catalyzes the NADPH-dependent rearrangement and reduction of 1-deoxy-D-xylulose-5-phosphate (DXP) to 2-C-methyl-D-erythritol 4-phosphate (MEP). This Pectobacterium atrosepticum (strain SCRI 1043 / ATCC BAA-672) (Erwinia carotovora subsp. atroseptica) protein is 1-deoxy-D-xylulose 5-phosphate reductoisomerase.